A 66-amino-acid polypeptide reads, in one-letter code: Large ribosomal subunit protein uL29c (66 aa).

This sequence belongs to the universal ribosomal protein uL29 family.

The protein resides in the plastid. It localises to the chloroplast. The protein is Large ribosomal subunit protein uL29c of Gracilaria tenuistipitata var. liui (Red alga).